The sequence spans 108 residues: UPF0060 membrane protein CKO_01576 (108 aa).

The next 4 helical transmembrane spans lie at Leu-6–Leu-26, Gly-29–Leu-49, Ala-61–Val-81, and Leu-85–Trp-105.

The protein belongs to the UPF0060 family.

The protein resides in the cell inner membrane. The sequence is that of UPF0060 membrane protein CKO_01576 from Citrobacter koseri (strain ATCC BAA-895 / CDC 4225-83 / SGSC4696).